Consider the following 215-residue polypeptide: HTH-type transcriptional repressor FabR (215 aa).

The 61-residue stretch at 10-70 (KTRRSLVEAA…TMVDESGLML (61 aa)) folds into the HTH tetR-type domain. Positions 33 to 52 (SLREVAREAGIAPTSFYRHF) form a DNA-binding region, H-T-H motif.

Homodimer.

It is found in the cytoplasm. Its function is as follows. Represses the transcription of fabB, involved in unsaturated fatty acid (UFA) biosynthesis. By controlling UFA production, FabR directly influences the physical properties of the membrane bilayer. This is HTH-type transcriptional repressor FabR from Escherichia coli O9:H4 (strain HS).